Here is a 103-residue protein sequence, read N- to C-terminus: Co-chaperonin GroES (103 aa).

Belongs to the GroES chaperonin family. Heptamer of 7 subunits arranged in a ring. Interacts with the chaperonin GroEL.

The protein resides in the cytoplasm. Functionally, together with the chaperonin GroEL, plays an essential role in assisting protein folding. The GroEL-GroES system forms a nano-cage that allows encapsulation of the non-native substrate proteins and provides a physical environment optimized to promote and accelerate protein folding. GroES binds to the apical surface of the GroEL ring, thereby capping the opening of the GroEL channel. The polypeptide is Co-chaperonin GroES (Prochlorococcus marinus subsp. pastoris (strain CCMP1986 / NIES-2087 / MED4)).